Consider the following 1026-residue polypeptide: Multidrug resistance protein MdtC (1026 aa).

11 helical membrane passes run 15 to 35 (ILIAAAITLCGILGFRLLPVA), 333 to 353 (EVEETLAISVALVILVVFLFL), 360 to 380 (LIPAVAVPVSLIGTFAAMYLC), 387 to 407 (LSLMALTIATGFVVDDAIVVL), 431 to 451 (VGFTVISMSLSLVAVFLPLLL), 463 to 483 (FAVTLSVAIGISLVVSLTLTP), 528 to 548 (LVGVVFLGTVALNIWLYIAIP), 853 to 873 (LILIVAAIATVYIVLGILYES), 897 to 917 (LFNAPFSLIALIGIMLLIGIV), 953 to 973 (PIMMTTLAALFGALPLVLSGG), and 984 to 1004 (ITIVGGLVMSQLLTLYTTPVV).

It belongs to the resistance-nodulation-cell division (RND) (TC 2.A.6) family. MdtC subfamily. As to quaternary structure, part of a tripartite efflux system composed of MdtA, MdtB and MdtC. MdtC forms a heteromultimer with MdtB.

The protein localises to the cell inner membrane. The protein is Multidrug resistance protein MdtC of Salmonella dublin (strain CT_02021853).